The following is a 666-amino-acid chain: tRNA 5-methylaminomethyl-2-thiouridine biosynthesis bifunctional protein MnmC (666 aa).

A tRNA (mnm(5)s(2)U34)-methyltransferase region spans residues 1–245 (MKQYAIQPAT…KREMLCGVME (245 aa)). Residues 270-666 (IGGGIASALL…RKLLKGKAVK (397 aa)) form an FAD-dependent cmnm(5)s(2)U34 oxidoreductase region.

It in the N-terminal section; belongs to the methyltransferase superfamily. tRNA (mnm(5)s(2)U34)-methyltransferase family. This sequence in the C-terminal section; belongs to the DAO family. The cofactor is FAD.

The protein localises to the cytoplasm. It carries out the reaction 5-aminomethyl-2-thiouridine(34) in tRNA + S-adenosyl-L-methionine = 5-methylaminomethyl-2-thiouridine(34) in tRNA + S-adenosyl-L-homocysteine + H(+). In terms of biological role, catalyzes the last two steps in the biosynthesis of 5-methylaminomethyl-2-thiouridine (mnm(5)s(2)U) at the wobble position (U34) in tRNA. Catalyzes the FAD-dependent demodification of cmnm(5)s(2)U34 to nm(5)s(2)U34, followed by the transfer of a methyl group from S-adenosyl-L-methionine to nm(5)s(2)U34, to form mnm(5)s(2)U34. The chain is tRNA 5-methylaminomethyl-2-thiouridine biosynthesis bifunctional protein MnmC from Salmonella paratyphi B (strain ATCC BAA-1250 / SPB7).